The chain runs to 612 residues: Dihydroxy-acid dehydratase (612 aa).

Mg(2+) is bound at residue D81. C122 contacts [2Fe-2S] cluster. The Mg(2+) site is built by D123 and K124. K124 is modified (N6-carboxylysine). C195 provides a ligand contact to [2Fe-2S] cluster. A Mg(2+)-binding site is contributed by E491. S517 functions as the Proton acceptor in the catalytic mechanism.

The protein belongs to the IlvD/Edd family. In terms of assembly, homodimer. Requires [2Fe-2S] cluster as cofactor. Mg(2+) serves as cofactor.

The catalysed reaction is (2R)-2,3-dihydroxy-3-methylbutanoate = 3-methyl-2-oxobutanoate + H2O. The enzyme catalyses (2R,3R)-2,3-dihydroxy-3-methylpentanoate = (S)-3-methyl-2-oxopentanoate + H2O. It participates in amino-acid biosynthesis; L-isoleucine biosynthesis; L-isoleucine from 2-oxobutanoate: step 3/4. The protein operates within amino-acid biosynthesis; L-valine biosynthesis; L-valine from pyruvate: step 3/4. Functions in the biosynthesis of branched-chain amino acids. Catalyzes the dehydration of (2R,3R)-2,3-dihydroxy-3-methylpentanoate (2,3-dihydroxy-3-methylvalerate) into 2-oxo-3-methylpentanoate (2-oxo-3-methylvalerate) and of (2R)-2,3-dihydroxy-3-methylbutanoate (2,3-dihydroxyisovalerate) into 2-oxo-3-methylbutanoate (2-oxoisovalerate), the penultimate precursor to L-isoleucine and L-valine, respectively. The sequence is that of Dihydroxy-acid dehydratase from Rhizobium meliloti (strain 1021) (Ensifer meliloti).